We begin with the raw amino-acid sequence, 390 residues long: Prostaglandin E2 receptor EP3 subtype (390 aa).

Residues 1 to 53 (MKETRGYGGDAPFCTRLNHSYTGMWAPERSAEARGNLTRPPGSGEDCGSVSVA) lie on the Extracellular side of the membrane. Asn18 and Asn36 each carry an N-linked (GlcNAc...) asparagine glycan. The helical transmembrane segment at 54–78 (FPITMLLTGFVGNALAMLLVSRSYR) threads the bilayer. The Cytoplasmic portion of the chain corresponds to 79–91 (RRESKRKKSFLLC). A helical transmembrane segment spans residues 92 to 112 (IGWLALTDLVGQLLTTPVVIV). The Extracellular portion of the chain corresponds to 113–131 (VYLSKQRWEHIDPSGRLCT). A helical membrane pass occupies residues 132–153 (FFGLTMTVFGLSSLFIASAMAV). Residues 154-175 (ERALAIRAPHWYASHMKTRATR) are Cytoplasmic-facing. Residues 176 to 197 (AVLLGVWLAVLAFALLPVLGVG) form a helical membrane-spanning segment. The Extracellular segment spans residues 198-227 (QYTVQWPGTWCFISTGRGGNGTSSSHNWGN). The helical transmembrane segment at 228-253 (LFFASAFAFLGLLALTVTFSCNLATI) threads the bilayer. Residues 254–283 (KALVSRCRAKATASQSSAQWGRITTETAIQ) lie on the Cytoplasmic side of the membrane. Residues 284–307 (LMGIMCVLSVCWSPLLIMMLKMIF) traverse the membrane as a helical segment. Topologically, residues 308–327 (NQTSVEHCKTHTEKQKECNF) are extracellular. Residues 328–349 (FLIAVRLASLNQILDPWVYLLL) traverse the membrane as a helical segment. Over 350 to 390 (RKILLRKFCQIRYHTNNYASSSTSLPCQCSSTLMWSDHLER) the chain is Cytoplasmic.

Belongs to the G-protein coupled receptor 1 family. As to quaternary structure, interacts (via C-terminus) with MKLN1. In terms of tissue distribution, detected in kidney. Expressed in small intestine, heart, pancreas, gastric fundic mucosa, mammary artery and pulmonary vessels.

The protein localises to the cell membrane. In terms of biological role, receptor for prostaglandin E2 (PGE2). The activity of this receptor can couple to both the inhibition of adenylate cyclase mediated by G(i) proteins, and to an elevation of intracellular calcium. Required for normal development of fever in response to pyrinogens, including IL1B, prostaglandin E2 and bacterial lipopolysaccharide (LPS). Required for normal potentiation of platelet aggregation by prostaglandin E2, and thus plays a role in the regulation of blood coagulation. Required for increased HCO3(-) secretion in the duodenum in response to mucosal acidification, and thereby contributes to the protection of the mucosa against acid-induced ulceration. Not required for normal kidney function, normal urine volume and osmolality. The chain is Prostaglandin E2 receptor EP3 subtype (PTGER3) from Homo sapiens (Human).